Consider the following 1263-residue polypeptide: DNA topoisomerase 2 (1263 aa).

ATP contacts are provided by residues N80, N109, 137–139 (STN), and 150–157 (GKNGFGAK). Residues 329–331 (VKK) form an interaction with DNA region. 362 to 364 (QTK) contacts ATP. Residues 439–553 (CTLILTEGDS…SLVKYEGFIQ (115 aa)) form the Toprim domain. Residues E445, D522, and D524 each contribute to the Mg(2+) site. A Topo IIA-type catalytic domain is found at 737–1223 (VPNLMDGFKP…SPEEIWEEEL (487 aa)). The O-(5'-phospho-DNA)-tyrosine intermediate role is filled by Y828. Positions 977–1015 (KKASKAVSSAKNTKTTTKAGSKTGSRTRKNPALAKKSQK) are disordered. A compositionally biased stretch (low complexity) spans 981-1000 (KAVSSAKNTKTTTKAGSKTG). Positions 1068–1077 (KLVKPLNLTN) are interaction with DNA. Positions 1244–1263 (LLNKKKGSTGKKSRKTSTQK) are disordered. Over residues 1247–1263 (KKKGSTGKKSRKTSTQK) the composition is skewed to basic residues.

This sequence belongs to the type II topoisomerase family. Requires Mg(2+) as cofactor. The cofactor is Mn(2+). Ca(2+) serves as cofactor.

It catalyses the reaction ATP-dependent breakage, passage and rejoining of double-stranded DNA.. In terms of biological role, can introduce negative superhelical turns into double-stranded circular DNA. In Acanthamoeba polyphaga (Amoeba), this protein is DNA topoisomerase 2 (TOP2).